The chain runs to 643 residues: Enzymatic polyprotein (643 aa).

A Peptidase A3A domain is found at 6-209 (NPNATFITVK…KEVNVPNNIP (204 aa)). D26 serves as the catalytic For protease activity. A Reverse transcriptase domain is found at 226-410 (VRKGIIEESK…QTIDFLGLTL (185 aa)). Residues D296, D360, and D361 each contribute to the Mg(2+) site.

It belongs to the caulimoviridae enzymatic polyprotein family.

The enzyme catalyses DNA(n) + a 2'-deoxyribonucleoside 5'-triphosphate = DNA(n+1) + diphosphate. Encodes for at least two polypeptides: protease (PR) and reverse transcriptase (RT). The protease processes the polyprotein in cis. Reverse transcriptase is multifunctional enzyme that converts the viral RNA genome into dsDNA in viral cytoplasmic capsids. This enzyme displays a DNA polymerase activity that can copy either DNA or RNA templates, and a ribonuclease H (RNase H) activity that cleaves the RNA strand of RNA-DNA heteroduplexes in a partially processive 3'- to 5'-endonucleasic mode. Neo-synthesized pregenomic RNA (pgRNA) are encapsidated, and reverse-transcribed inside the nucleocapsid. Partial (+)DNA is synthesized from the (-)DNA template and generates the relaxed circular DNA (RC-DNA) genome. After budding and infection, the RC-DNA migrates in the nucleus, and is converted into a plasmid-like covalently closed circular DNA (cccDNA). In Cestrum parqui (CmYLCV), this protein is Enzymatic polyprotein.